The following is a 320-amino-acid chain: Probable carboxylesterase M8 (320 aa).

The Involved in the stabilization of the negatively charged intermediate by the formation of the oxyanion hole signature appears at 52–54; sequence HGG. Active-site residues include Ser137 and His296.

This sequence belongs to the 'GDXG' lipolytic enzyme family.

It carries out the reaction a carboxylic ester + H2O = an alcohol + a carboxylate + H(+). It participates in secondary metabolite biosynthesis. In terms of biological role, probable carboxylesterase; part of the gene cluster that mediates the biosynthesis of squalestatin S1 (SQS1, also known as zaragozic acid A), a heavily oxidized fungal polyketide that offers potent cholesterol lowering activity by targeting squalene synthase (SS). SQS1 is composed of a 2,8-dioxobicyclic[3.2.1]octane-3,4,5-tricarboxyclic acid core that is connected to two lipophilic polyketide arms. These initial steps feature the priming of an unusual benzoic acid starter unit onto the highly reducing polyketide synthase pks2, followed by oxaloacetate extension and product release to generate a tricarboxylic acid containing product. The phenylalanine ammonia lyase (PAL) M7 and the acyl-CoA ligase M9 are involved in transforming phenylalanine into benzoyl-CoA. The citrate synthase-like protein R3 is involved in connecting the C-alpha-carbons of the hexaketide chain and oxaloacetate to afford the tricarboxylic acid unit. The potential hydrolytic enzymes, M8 and M10, are in close proximity to pks2 and may participate in product release. On the other side, the tetraketide arm is synthesized by a the squalestatin tetraketide synthase pks1 and enzymatically esterified to the core in the last biosynthetic step, by the acetyltransferase M4. The biosynthesis of the tetraketide must involve 3 rounds of chain extension. After the first and second rounds methyl-transfer occurs, and in all rounds of extension the ketoreductase and dehydratase are active. The enoyl reductase and C-MeT of pks1 are not active in the final round of extension. The acetyltransferase M4 appears to have a broad substrate selectivity for its acyl CoA substrate, allowing the in vitro synthesis of novel squalestatins. The biosynthesis of SQS1 requires several oxidative steps likely performed by oxidoreductases M1, R1 and R2. Finally, in support of the identification of the cluster as being responsible for SQS1 production, the cluster contains a gene encoding a putative squalene synthase (SS) R6, suggesting a likely mechanism for self-resistance. This chain is Probable carboxylesterase M8, found in Phoma sp. (strain ATCC 20986 / MF5453).